A 694-amino-acid polypeptide reads, in one-letter code: Methionine--tRNA ligase (694 aa).

A 'HIGH' region motif is present at residues 12-22 (PYANGPLHLGH). The Zn(2+) site is built by C143, C146, C156, and C159. Positions 330–334 (KMSKS) match the 'KMSKS' region motif. Position 333 (K333) interacts with ATP. The tract at residues 550-577 (LAAPATPATASKPAPAKADAKPAAAANP) is disordered. Residues 551 to 575 (AAPATPATASKPAPAKADAKPAAAA) are compositionally biased toward low complexity. The 104-residue stretch at 591-694 (DFAKLDLRIG…SGAQPGMPVR (104 aa)) folds into the tRNA-binding domain.

It belongs to the class-I aminoacyl-tRNA synthetase family. MetG type 1 subfamily. Homodimer. It depends on Zn(2+) as a cofactor.

The protein localises to the cytoplasm. The catalysed reaction is tRNA(Met) + L-methionine + ATP = L-methionyl-tRNA(Met) + AMP + diphosphate. Is required not only for elongation of protein synthesis but also for the initiation of all mRNA translation through initiator tRNA(fMet) aminoacylation. This chain is Methionine--tRNA ligase, found in Xanthomonas axonopodis pv. citri (strain 306).